A 475-amino-acid chain; its full sequence is Adenosylhomocysteinase (475 aa).

Residues Thr61, Asp140, and Glu200 each coordinate substrate. 201–203 (TTT) lines the NAD(+) pocket. Residues Lys230 and Asp234 each contribute to the substrate site. Residues Asn235, 264 to 269 (GYGDVG), Glu287, Asn322, 343 to 345 (IGH), and Asn388 each bind NAD(+).

This sequence belongs to the adenosylhomocysteinase family. The cofactor is NAD(+).

It is found in the cytoplasm. The enzyme catalyses S-adenosyl-L-homocysteine + H2O = L-homocysteine + adenosine. The protein operates within amino-acid biosynthesis; L-homocysteine biosynthesis; L-homocysteine from S-adenosyl-L-homocysteine: step 1/1. Its function is as follows. May play a key role in the regulation of the intracellular concentration of adenosylhomocysteine. This Paracidovorax citrulli (strain AAC00-1) (Acidovorax citrulli) protein is Adenosylhomocysteinase.